Reading from the N-terminus, the 442-residue chain is Histidine--tRNA ligase (442 aa).

Belongs to the class-II aminoacyl-tRNA synthetase family. As to quaternary structure, homodimer.

The protein resides in the cytoplasm. It catalyses the reaction tRNA(His) + L-histidine + ATP = L-histidyl-tRNA(His) + AMP + diphosphate + H(+). The protein is Histidine--tRNA ligase of Helicobacter pylori (strain P12).